We begin with the raw amino-acid sequence, 376 residues long: Alcohol dehydrogenase class-3 (376 aa).

Zn(2+)-binding residues include cysteine 40, histidine 62, cysteine 92, cysteine 95, cysteine 98, cysteine 106, and cysteine 170.

It belongs to the zinc-containing alcohol dehydrogenase family. Class-III subfamily. Homodimer. Zn(2+) is required as a cofactor.

The protein resides in the cytoplasm. The enzyme catalyses a primary alcohol + NAD(+) = an aldehyde + NADH + H(+). It catalyses the reaction a secondary alcohol + NAD(+) = a ketone + NADH + H(+). The catalysed reaction is S-(hydroxymethyl)glutathione + NADP(+) = S-formylglutathione + NADPH + H(+). It carries out the reaction S-(hydroxymethyl)glutathione + NAD(+) = S-formylglutathione + NADH + H(+). Oxidizes long-chain aliphatic alcohols, long-chain hydroxylated fatty acids and S-hydroxymethylglutathione (hmGSH) in increasing order of preference. Shows little or no activity with short-chain aliphatic alcohols. The protein is Alcohol dehydrogenase class-3 (adhI) of Cereibacter sphaeroides (strain ATCC 17023 / DSM 158 / JCM 6121 / CCUG 31486 / LMG 2827 / NBRC 12203 / NCIMB 8253 / ATH 2.4.1.) (Rhodobacter sphaeroides).